Consider the following 341-residue polypeptide: Ribosomal RNA small subunit methyltransferase H (341 aa).

Residues 47 to 49 (GGY), aspartate 64, phenylalanine 91, aspartate 109, and glutamine 116 each bind S-adenosyl-L-methionine.

It belongs to the methyltransferase superfamily. RsmH family.

It localises to the cytoplasm. It carries out the reaction cytidine(1402) in 16S rRNA + S-adenosyl-L-methionine = N(4)-methylcytidine(1402) in 16S rRNA + S-adenosyl-L-homocysteine + H(+). Specifically methylates the N4 position of cytidine in position 1402 (C1402) of 16S rRNA. This Rhizobium johnstonii (strain DSM 114642 / LMG 32736 / 3841) (Rhizobium leguminosarum bv. viciae) protein is Ribosomal RNA small subunit methyltransferase H.